The sequence spans 201 residues: Probable GTP-binding protein EngB (201 aa).

Positions 22–195 (TQPEFAFAGK…WRCIEQFLEV (174 aa)) constitute an EngB-type G domain. GTP contacts are provided by residues 30-37 (GKSNVGKS), 57-61 (GKTQT), 75-78 (DLPG), 142-145 (TKLD), and 174-176 (FSS). Positions 37 and 59 each coordinate Mg(2+).

This sequence belongs to the TRAFAC class TrmE-Era-EngA-EngB-Septin-like GTPase superfamily. EngB GTPase family. It depends on Mg(2+) as a cofactor.

Functionally, necessary for normal cell division and for the maintenance of normal septation. This Lachnoclostridium phytofermentans (strain ATCC 700394 / DSM 18823 / ISDg) (Clostridium phytofermentans) protein is Probable GTP-binding protein EngB.